The chain runs to 152 residues: SsrA-binding protein (152 aa).

The interval 130 to 152 is disordered; sequence HDKRQDLKQRQDKREMERAMKQR. A compositionally biased stretch (basic and acidic residues) spans 132-152; it reads KRQDLKQRQDKREMERAMKQR.

The protein belongs to the SmpB family.

Its subcellular location is the cytoplasm. In terms of biological role, required for rescue of stalled ribosomes mediated by trans-translation. Binds to transfer-messenger RNA (tmRNA), required for stable association of tmRNA with ribosomes. tmRNA and SmpB together mimic tRNA shape, replacing the anticodon stem-loop with SmpB. tmRNA is encoded by the ssrA gene; the 2 termini fold to resemble tRNA(Ala) and it encodes a 'tag peptide', a short internal open reading frame. During trans-translation Ala-aminoacylated tmRNA acts like a tRNA, entering the A-site of stalled ribosomes, displacing the stalled mRNA. The ribosome then switches to translate the ORF on the tmRNA; the nascent peptide is terminated with the 'tag peptide' encoded by the tmRNA and targeted for degradation. The ribosome is freed to recommence translation, which seems to be the essential function of trans-translation. This is SsrA-binding protein from Thermosynechococcus vestitus (strain NIES-2133 / IAM M-273 / BP-1).